Consider the following 401-residue polypeptide: Phosphonopyruvate decarboxylase (401 aa).

The interval 382–401 (WPASAVGSGTRAAAGSAGDR) is disordered. Positions 384–401 (ASAVGSGTRAAAGSAGDR) are enriched in low complexity.

The protein belongs to the TPP enzyme family. It depends on thiamine diphosphate as a cofactor. Requires Mg(2+) as cofactor.

The catalysed reaction is 3-phosphonopyruvate + H(+) = phosphonoacetaldehyde + CO2. It functions in the pathway secondary metabolite biosynthesis; bialaphos biosynthesis. In terms of biological role, involved in the biosynthesis of phosphinothricin tripeptide (PTT), also known as bialaphos (BA), a natural-product antibiotic and potent herbicide. Catalyzes the decarboxylation of phosphonopyruvate (PnPy) to generate phosphonoacetaldehyde (PnAA). The polypeptide is Phosphonopyruvate decarboxylase (Streptomyces hygroscopicus).